A 1178-amino-acid polypeptide reads, in one-letter code: Double-stranded RNA-specific adenosine deaminase (1178 aa).

Positions 1–40 (MSQGFRGPTGVFPHQTQSYLDPSHEHSKWRYPQPQGPESY) are disordered. Asymmetric dimethylarginine is present on residues Arg30 and Arg42. The 67-residue stretch at 135–201 (LSISQSPEQK…GKPPLWSLVP (67 aa)) folds into the Z-binding 1 domain. The interaction with Z-DNA stretch occupies residues 135–204 (LSISQSPEQK…PLWSLVPLSQ (70 aa)). The disordered stretch occupies residues 221–244 (EFPRGEPGLDSEDGDPASDLEGPS). Positions 229–238 (LDSEDGDPAS) are enriched in acidic residues. 2 positions are modified to phosphoserine: Ser231 and Ser238. The 65-residue stretch at 246–310 (PLDMAEIKEK…ATPPIWYLTD (65 aa)) folds into the Z-binding 2 domain. The segment at 316–383 (LQMKRSTHSA…SRHEARPGPM (68 aa)) is disordered. A compositionally biased stretch (low complexity) spans 323–337 (HSAPAPTPTAVPEAT). Basic and acidic residues predominate over residues 360–379 (KRVENGQEPAIKHESRHEAR). Lys371 is covalently cross-linked (Glycyl lysine isopeptide (Lys-Gly) (interchain with G-Cter in SUMO); alternate). A Glycyl lysine isopeptide (Lys-Gly) (interchain with G-Cter in SUMO1); alternate cross-link involves residue Lys371. Residue Lys371 forms a Glycyl lysine isopeptide (Lys-Gly) (interchain with G-Cter in SUMO2); alternate linkage. At Ser434 the chain carries Phosphoserine. Positions 456–524 (NPVSGLLEYA…AVKAMAILLR (69 aa)) constitute a DRBM 1 domain. The span at 527–550 (KAKDSGQPEDLSHCPMEEDSEKPA) shows a compositional bias: basic and acidic residues. The disordered stretch occupies residues 527-564 (KAKDSGQPEDLSHCPMEEDSEKPAEAQAPSSSATSLFS). A compositionally biased stretch (polar residues) spans 554-564 (APSSSATSLFS). A phosphoserine mark is found at Ser567, Ser582, and Ser589. The region spanning 567-635 (SPVTTLLECM…AEEAMKALQE (69 aa)) is the DRBM 2 domain. The tract at residues 631 to 657 (KALQEEAASSADDQSGGANTDSLDESM) is disordered. Positions 635 to 648 (EEAASSADDQSGGA) are enriched in low complexity. The interval 665–674 (IGELVRYLNT) is N-terminal extension of DRBM 3 and constituent of a bi-partite nuclear localization signal. One can recognise a DRBM 3 domain in the interval 675–743 (NPVGGLLEYA…ADAALRVLIG (69 aa)). The tract at residues 744 to 750 (ESEKAEQ) is C-terminal extension of DRBM 3 and constituent of a bi-partite nuclear localization signal. A Phosphothreonine modification is found at Thr757. 3 positions are modified to phosphoserine: Ser763, Ser772, and Ser774. Residue Lys824 forms a Glycyl lysine isopeptide (Lys-Gly) (interchain with G-Cter in SUMO2) linkage. An A to I editase domain is found at 835 to 1170 (SLGTGNRCVK…ISKPQEEKNF (336 aa)). His859 provides a ligand contact to Zn(2+). The active-site Proton donor is Glu861. Cys915 and Cys985 together coordinate Zn(2+).

Homodimer. Homodimerization is essential for its catalytic activity. Isoform 5 can form heterodimers with ADARB1/ADAR2. Isoform 1 and isoform 5 (via DRBM 3 domain) interact with TNPO1. Isoform 5 (via DRBM domains) interacts with XPO5. Isoform 1 and isoform 5 can interact with UPF1. Isoform 1 interacts with ILF2/NF45 and ILF3/NF90. Binding to ILF3/NF90 up-regulates ILF3-mediated gene expression. Isoform 1 and isoform 5 interact with EIF2AK2/PKR. Post-translationally, sumoylation reduces RNA-editing activity. In terms of tissue distribution, highest levels in brain and spleen. Lowest levels in liver.

It is found in the cytoplasm. It localises to the nucleus. The protein localises to the nucleolus. It catalyses the reaction adenosine in double-stranded RNA + H2O + H(+) = inosine in double-stranded RNA + NH4(+). In terms of biological role, catalyzes the hydrolytic deamination of adenosine to inosine in double-stranded RNA (dsRNA) referred to as A-to-I RNA editing. This may affect gene expression and function in a number of ways that include mRNA translation by changing codons and hence the amino acid sequence of proteins since the translational machinery read the inosine as a guanosine; pre-mRNA splicing by altering splice site recognition sequences; RNA stability by changing sequences involved in nuclease recognition; genetic stability in the case of RNA virus genomes by changing sequences during viral RNA replication; and RNA structure-dependent activities such as microRNA production or targeting or protein-RNA interactions. Can edit both viral and cellular RNAs and can edit RNAs at multiple sites (hyper-editing) or at specific sites (site-specific editing). Its cellular RNA substrates include: bladder cancer-associated protein (BLCAP), neurotransmitter receptors for glutamate (GRIA2) and serotonin (HTR2C) and GABA receptor (GABRA3). Site-specific RNA editing of transcripts encoding these proteins results in amino acid substitutions which consequently alters their functional activities. Exhibits low-level editing at the GRIA2 Q/R site, but edits efficiently at the R/G site and HOTSPOT1. Does not affect polyomavirus replication but provides protection against virus-induced cytopathic effects. Essential for embryonic development and cell survival and plays a critical role in the maintenance of hematopoietic stem cells. The protein is Double-stranded RNA-specific adenosine deaminase (Adar) of Mus musculus (Mouse).